Consider the following 74-residue polypeptide: MSKDKKNKVEQLEPVDLFERTKLEDTQVLNDVELDDIKKLEELKKELENTFEPRTRIEIKREIKELERKLRRNR.

This sequence to U.parvum UU416.

This is an uncharacterized protein from Mycoplasma pneumoniae (strain ATCC 29342 / M129 / Subtype 1) (Mycoplasmoides pneumoniae).